Here is a 349-residue protein sequence, read N- to C-terminus: Acyl-CoA Delta(11) desaturase (349 aa).

A run of 2 helical transmembrane segments spans residues Phe-41–Ser-61 and Thr-66–His-86. The Histidine box-1 signature appears at His-86 to His-91. A Histidine box-2 motif is present at residues His-123–His-127. The chain crosses the membrane as a helical span at residues Ala-184–Trp-204. A Histidine box-3 motif is present at residues His-263–His-267. A helical transmembrane segment spans residues Phe-282–Leu-302.

This sequence belongs to the fatty acid desaturase type 1 family. Fe cation is required as a cofactor. As to expression, adult female pheromone gland. Increases by two or three orders of magnitude during the first 2 days after adult eclosion.

It is found in the endoplasmic reticulum membrane. It catalyses the reaction an 11,12-saturated fatty acyl-CoA + 2 Fe(II)-[cytochrome b5] + O2 + 2 H(+) = an (11Z)-Delta(11)-fatty acyl-CoA + 2 Fe(III)-[cytochrome b5] + 2 H2O. Functionally, catalyzes the formation of Delta(11) fatty acyl precursors in the pheromone gland. This Trichoplusia ni (Cabbage looper) protein is Acyl-CoA Delta(11) desaturase (D11DS).